A 139-amino-acid polypeptide reads, in one-letter code: uncharacterized protein (139 aa).

A helical membrane pass occupies residues 22–38 (SVMSVCFMTMSATVLPI).

It is found in the membrane. This is an uncharacterized protein from Saccharomyces cerevisiae (strain ATCC 204508 / S288c) (Baker's yeast).